The sequence spans 180 residues: Large ribosomal subunit protein uL22 (180 aa).

2 disordered regions span residues 1–20 (MTKP…CKSR) and 160–180 (PKPA…EISA). Over residues 8-20 (KTPSNPEKSCKSR) the composition is skewed to polar residues.

The protein belongs to the universal ribosomal protein uL22 family.

The sequence is that of Large ribosomal subunit protein uL22 (rpl17) from Dictyostelium discoideum (Social amoeba).